The following is a 512-amino-acid chain: GMP synthase [glutamine-hydrolyzing] (512 aa).

The region spanning 7–197 is the Glutamine amidotransferase type-1 domain; that stretch reads LVLVVDFGGQ…LFKVAGLKAD (191 aa). The active-site Nucleophile is cysteine 84. Active-site residues include histidine 171 and glutamate 173. In terms of domain architecture, GMPS ATP-PPase spans 198–387; sequence WSMASFAEEK…LGIPHKLVWR (190 aa). Residue 225–231 coordinates ATP; that stretch reads SGGVDSS.

In terms of assembly, homodimer.

It catalyses the reaction XMP + L-glutamine + ATP + H2O = GMP + L-glutamate + AMP + diphosphate + 2 H(+). It functions in the pathway purine metabolism; GMP biosynthesis; GMP from XMP (L-Gln route): step 1/1. Its function is as follows. Catalyzes the synthesis of GMP from XMP. The polypeptide is GMP synthase [glutamine-hydrolyzing] (Clostridium novyi (strain NT)).